Reading from the N-terminus, the 540-residue chain is Esterase B1 (540 aa).

Cysteines 68 and 81 form a disulfide. Ser191 functions as the Acyl-ester intermediate in the catalytic mechanism. Catalysis depends on charge relay system residues Glu324 and His442. Asn452 carries an N-linked (GlcNAc...) asparagine glycan.

It belongs to the type-B carboxylesterase/lipase family.

It catalyses the reaction a carboxylic ester + H2O = an alcohol + a carboxylate + H(+). In terms of biological role, overproduction of nonspecific esterases is a common mechanism of resistance to organophosphate insecticides. The chain is Esterase B1 (B1) from Culex pipiens (House mosquito).